The chain runs to 367 residues: Peptide chain release factor 2 (367 aa).

Q250 carries the post-translational modification N5-methylglutamine.

Belongs to the prokaryotic/mitochondrial release factor family. Post-translationally, methylated by PrmC. Methylation increases the termination efficiency of RF2.

The protein resides in the cytoplasm. Its function is as follows. Peptide chain release factor 2 directs the termination of translation in response to the peptide chain termination codons UGA and UAA. The chain is Peptide chain release factor 2 from Kineococcus radiotolerans (strain ATCC BAA-149 / DSM 14245 / SRS30216).